The primary structure comprises 248 residues: Ubiquinone biosynthesis O-methyltransferase (248 aa).

Positions 41, 72, 93, and 136 each coordinate S-adenosyl-L-methionine.

It belongs to the methyltransferase superfamily. UbiG/COQ3 family.

The enzyme catalyses a 3-demethylubiquinol + S-adenosyl-L-methionine = a ubiquinol + S-adenosyl-L-homocysteine + H(+). It catalyses the reaction a 3-(all-trans-polyprenyl)benzene-1,2-diol + S-adenosyl-L-methionine = a 2-methoxy-6-(all-trans-polyprenyl)phenol + S-adenosyl-L-homocysteine + H(+). The protein operates within cofactor biosynthesis; ubiquinone biosynthesis. Its function is as follows. O-methyltransferase that catalyzes the 2 O-methylation steps in the ubiquinone biosynthetic pathway. The sequence is that of Ubiquinone biosynthesis O-methyltransferase from Rhizobium johnstonii (strain DSM 114642 / LMG 32736 / 3841) (Rhizobium leguminosarum bv. viciae).